The following is a 292-amino-acid chain: Large ribosomal subunit protein bL19m (292 aa).

The disordered stretch occupies residues 40–61 (PVRQQSTGPSEPGAFQPPPKPV). Position 77 is a phosphoserine (S77).

Belongs to the bacterial ribosomal protein bL19 family. In terms of assembly, component of the mitochondrial ribosome large subunit (39S) which comprises a 16S rRNA and about 50 distinct proteins.

Its subcellular location is the mitochondrion. The chain is Large ribosomal subunit protein bL19m (MRPL19) from Pongo abelii (Sumatran orangutan).